A 432-amino-acid polypeptide reads, in one-letter code: Glutamyl-tRNA reductase (432 aa).

Substrate-binding positions include threonine 55–arginine 58, serine 114, glutamate 119–glutamine 121, and glutamine 125. The Nucleophile role is filled by cysteine 56. Position 194–199 (glycine 194–isoleucine 199) interacts with NADP(+).

Belongs to the glutamyl-tRNA reductase family. As to quaternary structure, homodimer.

It carries out the reaction (S)-4-amino-5-oxopentanoate + tRNA(Glu) + NADP(+) = L-glutamyl-tRNA(Glu) + NADPH + H(+). The protein operates within porphyrin-containing compound metabolism; protoporphyrin-IX biosynthesis; 5-aminolevulinate from L-glutamyl-tRNA(Glu): step 1/2. In terms of biological role, catalyzes the NADPH-dependent reduction of glutamyl-tRNA(Glu) to glutamate 1-semialdehyde (GSA). The polypeptide is Glutamyl-tRNA reductase (Burkholderia cenocepacia (strain ATCC BAA-245 / DSM 16553 / LMG 16656 / NCTC 13227 / J2315 / CF5610) (Burkholderia cepacia (strain J2315))).